The primary structure comprises 137 residues: Nucleoside diphosphate kinase (137 aa).

Residues lysine 9, phenylalanine 57, arginine 85, threonine 91, arginine 102, and asparagine 112 each coordinate ATP. Residue histidine 115 is the Pros-phosphohistidine intermediate of the active site.

The protein belongs to the NDK family. As to quaternary structure, homotetramer. Requires Mg(2+) as cofactor.

The protein localises to the cytoplasm. The enzyme catalyses a 2'-deoxyribonucleoside 5'-diphosphate + ATP = a 2'-deoxyribonucleoside 5'-triphosphate + ADP. It carries out the reaction a ribonucleoside 5'-diphosphate + ATP = a ribonucleoside 5'-triphosphate + ADP. Major role in the synthesis of nucleoside triphosphates other than ATP. The ATP gamma phosphate is transferred to the NDP beta phosphate via a ping-pong mechanism, using a phosphorylated active-site intermediate. This chain is Nucleoside diphosphate kinase, found in Leptospira borgpetersenii serovar Hardjo-bovis (strain L550).